The sequence spans 461 residues: MSDSNHSLDLHSYTQLEVERFRESLIQFYDKTKRILPWRKKECIPPSEDSPLEDWEQPVQRLYEVLVSEIMLQQTRVETVKRYYTKWMETLPTLKSCAEAEYNTQVMPLWSGMGFYTRCKRLHQACQHLAKLHPSEIPRTGDEWAKGIPGVGPYTAGAVLSIAWKQPTGIVDGNVIRVLSRALAIHSDCSKGKANALIWKLANELVDPVRPGDFNQALMELGAITCTPQSPRCSVCPISEICKAYQEQNVIRDGNTIKYDIEDVPCNICITDIPSKEDLQNWVVARYPVHPAKTKQREERALVVIFQKTDPSTKEKFFLIRKRPSAGLLAGLWDFPTIEFGQESWPKDMDAEFQKSIAQWISNDSRSLIKKYQSRGRYLHIFSHIRKTSHVFYAIASPDIVTNEDFFWISQSDLEHVGMCELGLKNYRAALEIKKRKVTSLSNFKEPKLTSARRIVTKAEC.

Catalysis depends on Glu69, which acts as the Proton donor/acceptor. Residues Cys226, Cys233, Cys236, and Cys242 each contribute to the [4Fe-4S] cluster site. The region spanning 296 to 437 is the Nudix hydrolase domain; the sequence is QREERALVVI…RAALEIKKRK (142 aa). Positions 340-366 match the Nudix box motif; it reads FGQESWPKDMDAEFQKSIAQWISNDSR.

It belongs to the Nth/MutY family. As to quaternary structure, monomer. [4Fe-4S] cluster is required as a cofactor.

It catalyses the reaction Hydrolyzes free adenine bases from 7,8-dihydro-8-oxoguanine:adenine mismatched double-stranded DNA, leaving an apurinic site.. Functionally, adenine glycosylase active on G-A mispairs. Has glycosylase and nicking activities and is active at A/G and A/GO sites. In Schizosaccharomyces pombe (strain 972 / ATCC 24843) (Fission yeast), this protein is Adenine DNA glycosylase (myh1).